The following is a 199-amino-acid chain: Thymidylate kinase (199 aa).

Position 7 to 14 (7 to 14 (GTEGVGKT)) interacts with ATP.

This sequence belongs to the thymidylate kinase family.

The catalysed reaction is dTMP + ATP = dTDP + ADP. Its function is as follows. Phosphorylation of dTMP to form dTDP in both de novo and salvage pathways of dTTP synthesis. This chain is Thymidylate kinase, found in Acinetobacter baumannii (strain ATCC 17978 / DSM 105126 / CIP 53.77 / LMG 1025 / NCDC KC755 / 5377).